The chain runs to 423 residues: UPF0229 protein PSPPH_0628 (423 aa).

Positions 65–110 (HHGRGGKQTVVHPGNKEFTTGEHIARPQGGGGGKGPGKAGNSGEGM) are disordered. Residues 92 to 107 (QGGGGGKGPGKAGNSG) show a composition bias toward gly residues.

It belongs to the UPF0229 family.

This Pseudomonas savastanoi pv. phaseolicola (strain 1448A / Race 6) (Pseudomonas syringae pv. phaseolicola (strain 1448A / Race 6)) protein is UPF0229 protein PSPPH_0628.